The sequence spans 748 residues: E3 ubiquitin-protein ligase SMURF2 (748 aa).

One can recognise a C2 domain in the interval 1–119 (MSNPGGRRNG…TGYQRLDLCK (119 aa)). A Glycyl lysine isopeptide (Lys-Gly) (interchain with G-Cter in ubiquitin) cross-link involves residue Lys119. WW domains lie at 157 to 190 (NDLP…RPTR), 251 to 284 (PDLP…DPRV), and 297 to 330 (GPLP…DPRL). In terms of domain architecture, HECT spans 414–748 (RPKDLWKRLM…IEETCGFAVE (335 aa)). The active-site Glycyl thioester intermediate is the Cys716.

In terms of assembly, interacts (via WW domains) with SMAD1. Interacts (via WW domains) with SMAD2 (via PY-motif). Interacts (via WW domains) with SMAD3 (via PY-motif). Interacts with SMAD6. Interacts with SMAD7 (via PY-motif) and TGFBR1; SMAD7 recruits SMURF2 to the TGF-beta receptor and regulates its degradation. Does not interact with SMAD4; SMAD4 lacks a PY-motif. Interacts with AIMP1. Interacts with NDFIP1 and NDFIP2; this interaction activates the E3 ubiquitin-protein ligase. Interacts with TTC3. Auto-ubiquitinated and ubiquitinated in the presence of RNF11 and UBE2D1. Ubiquitinated by the SCF(FBXL15) complex and TTC3, leading to its degradation by the proteasome. 'Lys-48'-linked polyubiquitination mediated by TRAF4 at Lys-119 leads to SMURF2 proteasomal degradation.

The protein resides in the nucleus. It localises to the cytoplasm. It is found in the cell membrane. The protein localises to the membrane raft. The catalysed reaction is S-ubiquitinyl-[E2 ubiquitin-conjugating enzyme]-L-cysteine + [acceptor protein]-L-lysine = [E2 ubiquitin-conjugating enzyme]-L-cysteine + N(6)-ubiquitinyl-[acceptor protein]-L-lysine.. Its pathway is protein modification; protein ubiquitination. Its activity is regulated as follows. Activated by NDFIP1- and NDFIP2-binding. Functionally, E3 ubiquitin-protein ligase which accepts ubiquitin from an E2 ubiquitin-conjugating enzyme in the form of a thioester and then directly transfers the ubiquitin to targeted substrates. Interacts with SMAD7 to trigger SMAD7-mediated transforming growth factor beta/TGF-beta receptor ubiquitin-dependent degradation, thereby down-regulating TGF-beta signaling. In addition, interaction with SMAD7 activates autocatalytic degradation, which is prevented by interaction with AIMP1. Also forms a stable complex with TGF-beta receptor-mediated phosphorylated SMAD1, SMAD2 and SMAD3, and targets SMAD1 and SMAD2 for ubiquitination and proteasome-mediated degradation. SMAD2 may recruit substrates, such as SNON, for ubiquitin-dependent degradation. Negatively regulates TGFB1-induced epithelial-mesenchymal transition and myofibroblast differentiation. The chain is E3 ubiquitin-protein ligase SMURF2 from Mus musculus (Mouse).